The sequence spans 425 residues: MFDTVCTLPLSADLFSQALHPKEPVVSVGLSSGHVQTFRLPTDEAASDDDETSNASSRNGRGHIDTMWRTRRHKGSCRCLTFGIDGETLYSAGTDGLIKAAKAETGVVENKIAIPTEKNGSIDAPTIIHALSPQTLLLATDSSALHLYDLRIPYSKVSAKPEQSHHPHDDYVSSLTPLPASDTSTSGFSKQWVTTGGTTLAVTDLRRGVLVRSEDQEEELISSTYIGGLAASGTSRGEKVLVGGSGGVLTLWEKGAWDDQDERIYVERGGGGGESLETMAVLPDELGKGKVVAVGLGNGRVKFVRIGANKVAAEVMHDETEGVIGLGFDVEGRMVTGGGQVVKVWHEAVVGADRYGAMPGEKRMYGDSDDSDEGDDSDDDSDDSDAGGRQDKPQNKRKKTKAKGKGGQQIMAFHDLDSMESSVVY.

WD repeat units follow at residues 9 to 48, 72 to 111, 117 to 158, 221 to 262, and 318 to 355; these read PLSADLFSQALHPKEPVVSVGLSSGHVQTFRLPTDEAASD, RHKGSCRCLTFGIDGETLYSAGTDGLIKAAKAETGVVENK, EKNG…SKVS, ISST…DQDE, and DETEGVIGLGFDVEGRMVTGGGQVVKVWHEAVVGADRY. Residues 40–63 form a disordered region; the sequence is LPTDEAASDDDETSNASSRNGRGH. Residues 358 to 425 are disordered; sequence MPGEKRMYGD…LDSMESSVVY (68 aa). Positions 367-385 are enriched in acidic residues; it reads DSDDSDEGDDSDDDSDDSD. Positions 395–404 are enriched in basic residues; it reads NKRKKTKAKG.

Belongs to the WD repeat WDR55 family.

The protein localises to the nucleus. Its subcellular location is the nucleolus. The polypeptide is WD repeat-containing protein jip5 (jip5) (Aspergillus niger (strain ATCC MYA-4892 / CBS 513.88 / FGSC A1513)).